A 395-amino-acid chain; its full sequence is Ribosomal RNA small subunit methyltransferase H (395 aa).

S-adenosyl-L-methionine is bound by residues 101 to 103 (GGH), Asp-120, Tyr-147, Asp-171, and Gln-178.

This sequence belongs to the methyltransferase superfamily. RsmH family.

The protein localises to the cytoplasm. The enzyme catalyses cytidine(1402) in 16S rRNA + S-adenosyl-L-methionine = N(4)-methylcytidine(1402) in 16S rRNA + S-adenosyl-L-homocysteine + H(+). Specifically methylates the N4 position of cytidine in position 1402 (C1402) of 16S rRNA. This Mycobacterium marinum (strain ATCC BAA-535 / M) protein is Ribosomal RNA small subunit methyltransferase H.